Here is a 443-residue protein sequence, read N- to C-terminus: Ribosomal protein uS12 methylthiotransferase RimO (443 aa).

The MTTase N-terminal domain maps to 6-116 (PRVGMISLGC…VVNAVHDVVP (111 aa)). Positions 15, 51, 80, 149, 153, and 156 each coordinate [4Fe-4S] cluster. The region spanning 135 to 373 (LTPRHYAYLK…MAHQQAISAA (239 aa)) is the Radical SAM core domain. A TRAM domain is found at 376 to 443 (QMKIGKEIEV…DEYDLWAEML (68 aa)).

Belongs to the methylthiotransferase family. RimO subfamily. Requires [4Fe-4S] cluster as cofactor.

It localises to the cytoplasm. The catalysed reaction is L-aspartate(89)-[ribosomal protein uS12]-hydrogen + (sulfur carrier)-SH + AH2 + 2 S-adenosyl-L-methionine = 3-methylsulfanyl-L-aspartate(89)-[ribosomal protein uS12]-hydrogen + (sulfur carrier)-H + 5'-deoxyadenosine + L-methionine + A + S-adenosyl-L-homocysteine + 2 H(+). In terms of biological role, catalyzes the methylthiolation of an aspartic acid residue of ribosomal protein uS12. The sequence is that of Ribosomal protein uS12 methylthiotransferase RimO from Pseudomonas syringae pv. tomato (strain ATCC BAA-871 / DC3000).